A 143-amino-acid chain; its full sequence is Succinate dehydrogenase assembly factor 2, mitochondrial (143 aa).

The protein belongs to the SDHAF2 family. In terms of assembly, interacts with the flavoprotein subunit within the SDH catalytic dimer.

Its subcellular location is the mitochondrion matrix. In terms of biological role, plays an essential role in the assembly of succinate dehydrogenase (SDH), an enzyme complex (also referred to as respiratory complex II) that is a component of both the tricarboxylic acid (TCA) cycle and the mitochondrial electron transport chain, and which couples the oxidation of succinate to fumarate with the reduction of ubiquinone (coenzyme Q) to ubiquinol. Required for flavinylation (covalent attachment of FAD) of the flavoprotein subunit of the SDH catalytic dimer. The protein is Succinate dehydrogenase assembly factor 2, mitochondrial of Schizosaccharomyces japonicus (strain yFS275 / FY16936) (Fission yeast).